The chain runs to 61 residues: Small ribosomal subunit protein uS14 (61 aa).

Zn(2+) is bound by residues Cys-24, Cys-27, Cys-40, and Cys-43.

The protein belongs to the universal ribosomal protein uS14 family. Zinc-binding uS14 subfamily. As to quaternary structure, part of the 30S ribosomal subunit. Contacts proteins S3 and S10. Zn(2+) is required as a cofactor.

Functionally, binds 16S rRNA, required for the assembly of 30S particles and may also be responsible for determining the conformation of the 16S rRNA at the A site. The polypeptide is Small ribosomal subunit protein uS14 (Clostridium novyi (strain NT)).